A 634-amino-acid chain; its full sequence is Protection of telomeres protein 1 (634 aa).

Belongs to the telombin family. In terms of assembly, homodimer or homooligomer. Component of the shelterin complex (telosome) composed of TERF1, TERF2, TINF2, TERF2IP, ACD and POT1. Binds single-stranded telomeric DNA as a monomer. Associated component of the telomerase holoenzyme complex. Found in a complex with TERF1, TINF2 and TNKS1. Interacts with TNKS1. Forms heterodimers with ACD. Identified in a complex with ACD and single-stranded telomeric DNA.

The protein resides in the nucleus. It localises to the chromosome. The protein localises to the telomere. In terms of biological role, component of the telomerase ribonucleoprotein (RNP) complex that is essential for the replication of chromosome termini. Is a component of the double-stranded telomeric DNA-binding TRF1 complex which is involved in the regulation of telomere length by cis-inhibition of telomerase. Also acts as a single-stranded telomeric DNA-binding protein and thus may act as a downstream effector of the TRF1 complex and may transduce information about telomere maintenance and/or length to the telomere terminus. Component of the shelterin complex (telosome) that is involved in the regulation of telomere length and protection. Shelterin associates with arrays of double-stranded TTAGGG repeats added by telomerase and protects chromosome ends; without its protective activity, telomeres are no longer hidden from the DNA damage surveillance and chromosome ends are inappropriately processed by DNA repair pathways. Binds to two or more telomeric single-stranded 5'-TTAGGG-3' repeats (G-strand) and with high specificity to a minimal telomeric single-stranded 5'-TAGGGTTAG-3' sequence. Binds telomeric single-stranded sequences internally or at proximity of a 3'-end. Its activity is TERT dependent but it does not increase TERT activity by itself. In contrast, the ACD-POT1 heterodimer enhances telomere elongation by increasing telomerase processivity. This chain is Protection of telomeres protein 1 (POT1), found in Macaca fascicularis (Crab-eating macaque).